The sequence spans 563 residues: uncharacterized protein (563 aa).

The zn(2)-C6 fungal-type DNA-binding region spans 19 to 45 (CLICRRRKVKCDRQQPCSRCKERNEVC). Positions 56 to 78 (NVGPHPSHSENASDSETTLEVSP) are disordered. A compositionally biased stretch (polar residues) spans 64 to 75 (SENASDSETTLE).

It localises to the nucleus. This is an uncharacterized protein from Schizosaccharomyces pombe (strain 972 / ATCC 24843) (Fission yeast).